The primary structure comprises 218 residues: MANLTTLAVSTRAKAGKGAARATRREGLVPAVIYGGKQEPSIIALDPRVIMKELHRGGWSSRVYNLAAEGAEPVAALIRDVQLHPVTDAPIHVDFQRVAAGTKVHVEVSIAFVGEEKSPGIKRGGVLNVVRHYVDVQADPANIPEHFTAELSGLDIHDNVRWTDLKGTEGVVLGSGQAADMVIASIAAPTIDAEMEAEAAAKAAAEAEAAAKPGAKKK.

It belongs to the bacterial ribosomal protein bL25 family. CTC subfamily. Part of the 50S ribosomal subunit; part of the 5S rRNA/L5/L18/L25 subcomplex. Contacts the 5S rRNA. Binds to the 5S rRNA independently of L5 and L18.

Functionally, this is one of the proteins that binds to the 5S RNA in the ribosome where it forms part of the central protuberance. This chain is Large ribosomal subunit protein bL25, found in Gluconobacter oxydans (strain 621H) (Gluconobacter suboxydans).